A 785-amino-acid polypeptide reads, in one-letter code: Phenylalanine--tRNA ligase beta subunit (785 aa).

The tRNA-binding domain occupies 39–150 (RTWAAGVVVG…ASLPLGLDVG (112 aa)). The B5 domain maps to 400–476 (RENRVVSLRP…RVVGYDRFAP (77 aa)). D454, D460, E463, and E464 together coordinate Mg(2+). The region spanning 692–784 (SPFPPAARDL…LAERYSVDLR (93 aa)) is the FDX-ACB domain.

It belongs to the phenylalanyl-tRNA synthetase beta subunit family. Type 1 subfamily. In terms of assembly, tetramer of two alpha and two beta subunits. Mg(2+) serves as cofactor.

It localises to the cytoplasm. The catalysed reaction is tRNA(Phe) + L-phenylalanine + ATP = L-phenylalanyl-tRNA(Phe) + AMP + diphosphate + H(+). The polypeptide is Phenylalanine--tRNA ligase beta subunit (Gloeobacter violaceus (strain ATCC 29082 / PCC 7421)).